Here is a 124-residue protein sequence, read N- to C-terminus: UPF0538 protein (124 aa).

The protein belongs to the UPF0538 family.

This is UPF0538 protein from Dictyostelium discoideum (Social amoeba).